A 194-amino-acid chain; its full sequence is Peptidyl-tRNA hydrolase (194 aa).

Y17 contacts tRNA. H22 (proton acceptor) is an active-site residue. TRNA is bound by residues Y68, N70, and N116.

This sequence belongs to the PTH family. As to quaternary structure, monomer.

Its subcellular location is the cytoplasm. It catalyses the reaction an N-acyl-L-alpha-aminoacyl-tRNA + H2O = an N-acyl-L-amino acid + a tRNA + H(+). Its function is as follows. Hydrolyzes ribosome-free peptidyl-tRNAs (with 1 or more amino acids incorporated), which drop off the ribosome during protein synthesis, or as a result of ribosome stalling. Catalyzes the release of premature peptidyl moieties from peptidyl-tRNA molecules trapped in stalled 50S ribosomal subunits, and thus maintains levels of free tRNAs and 50S ribosomes. The protein is Peptidyl-tRNA hydrolase of Azotobacter vinelandii (strain DJ / ATCC BAA-1303).